The chain runs to 95 residues: Large ribosomal subunit protein uL23 (95 aa).

It belongs to the universal ribosomal protein uL23 family. Part of the 50S ribosomal subunit. Contacts protein L29, and trigger factor when it is bound to the ribosome.

In terms of biological role, one of the early assembly proteins it binds 23S rRNA. One of the proteins that surrounds the polypeptide exit tunnel on the outside of the ribosome. Forms the main docking site for trigger factor binding to the ribosome. The protein is Large ribosomal subunit protein uL23 of Pelotomaculum thermopropionicum (strain DSM 13744 / JCM 10971 / SI).